Here is a 483-residue protein sequence, read N- to C-terminus: Proline--tRNA ligase (483 aa).

The protein belongs to the class-II aminoacyl-tRNA synthetase family. ProS type 3 subfamily. In terms of assembly, homodimer.

Its subcellular location is the cytoplasm. The catalysed reaction is tRNA(Pro) + L-proline + ATP = L-prolyl-tRNA(Pro) + AMP + diphosphate. Functionally, catalyzes the attachment of proline to tRNA(Pro) in a two-step reaction: proline is first activated by ATP to form Pro-AMP and then transferred to the acceptor end of tRNA(Pro). The protein is Proline--tRNA ligase of Mycoplasma genitalium (strain ATCC 33530 / DSM 19775 / NCTC 10195 / G37) (Mycoplasmoides genitalium).